The sequence spans 205 residues: Probable GTP-binding protein EngB (205 aa).

The EngB-type G domain maps to 27–201; sequence EGMEIAFAGR…AAKLDSWFSS (175 aa). Residues 35–42, 62–66, 80–83, 147–150, and 180–182 contribute to the GTP site; these read GRSNAGKS, GRTQL, DLPG, TKAD, and FSA. 2 residues coordinate Mg(2+): Ser42 and Thr64.

The protein belongs to the TRAFAC class TrmE-Era-EngA-EngB-Septin-like GTPase superfamily. EngB GTPase family. Mg(2+) is required as a cofactor.

Necessary for normal cell division and for the maintenance of normal septation. The protein is Probable GTP-binding protein EngB of Mannheimia succiniciproducens (strain KCTC 0769BP / MBEL55E).